The primary structure comprises 247 residues: Vacuolar iron transporter 1 (247 aa).

Residues 1 to 33 (MVIAGVSPPTPSSENLLQEHEEKHFTATDVVRD) lie on the Cytoplasmic side of the membrane. The chain crosses the membrane as a helical span at residues 34 to 54 (VIIGVSDGLTVPFALAAGLSG). Over 55–60 (ANVPSS) the chain is Vacuolar. Residues 61–81 (LILTAGIAEVAAGAISMGLGG) form a helical membrane-spanning segment. Topologically, residues 82-167 (YLAAKSEEDH…PRRALESAMT (86 aa)) are cytoplasmic. Fe cation contacts are provided by glutamate 99, glutamate 102, glutamate 110, glutamate 113, methionine 146, and glutamate 150. A helical membrane pass occupies residues 168 to 188 (IALAYVVGGLVPLSPYFFIPF). Topologically, residues 189–191 (AKQ) are vacuolar. A helical membrane pass occupies residues 192-212 (AMITSIAVTLLALVVFGYIKG). The Cytoplasmic segment spans residues 213-219 (RFTGSNP). A helical membrane pass occupies residues 220-240 (VLSSIQTAIIGALASAAAYAM). At 241–247 (AKAVQSV) the chain is on the vacuolar side.

It belongs to the CCC1 family. In terms of tissue distribution, expressed at high levels in the blue epidermal cells of the inner bottom part of the petal (at protein level). No detectable expression in parenchyma and epidermis of the purple segments of the petal, parenchyma of the blue segments, leaf, stem, bulb and root (at protein level). High levels of mRNA in the blue epidermal cells of the inner bottom part of the petal. Low-levels of mRNA in the purple segments of the petal, stem, leaf, root, bulb and pistil.

Its subcellular location is the vacuole membrane. It carries out the reaction Fe(2+)(in) = Fe(2+)(out). Functionally, vacuolar iron transporter involved in the transfer of iron ions from the cytosol to the vacuole for intracellular iron storage. Plays an essential role in the development of blue coloration in tulip petals most likely due to the accumulation of ferrous ions that can form complexes with anthocyanins. The polypeptide is Vacuolar iron transporter 1 (Tulipa gesneriana (Garden tulip)).